Reading from the N-terminus, the 215-residue chain is Nucleoredoxin-like protein 1 (215 aa).

Residues 1–164 (MVDLFLGKVL…GAELIDRNFM (164 aa)) form the Thioredoxin; atypical domain. The disordered stretch occupies residues 190-215 (DEKKKKKKRDDDDDDDDGGGGGGPWG).

It belongs to the nucleoredoxin family.

Its subcellular location is the cell projection. The protein localises to the cilium. The protein resides in the photoreceptor outer segment. Plays an important role in retinal cone photoreceptor survival. May play a role in cone cell viability, slowing down cone degeneration, does not seem to play a role in degenerating rods. This is Nucleoredoxin-like protein 1 (nxnl1) from Danio rerio (Zebrafish).